The sequence spans 156 residues: Arginine repressor (156 aa).

The protein belongs to the ArgR family.

The protein localises to the cytoplasm. It functions in the pathway amino-acid biosynthesis; L-arginine biosynthesis [regulation]. In terms of biological role, regulates arginine biosynthesis genes. In Aliivibrio fischeri (strain ATCC 700601 / ES114) (Vibrio fischeri), this protein is Arginine repressor.